The primary structure comprises 211 residues: MTLAAGPAEAGDVLASRARELVAIGARMDARGWVPASAGNLSARCTADSIAITRSGVHKGRLEAADIIEVWLDGTPLRAGDRPSAETQLHCQVYERLPAAGAVLHGHSVAATALTLADNSPGIVLEGYEILKAFPGIATHETRIVLPVFDNDQDMRRLAAAIAPAFAAPPIGYVLRGHGIYAWGEDVERCFWRLEALEFLLSCECERRRMR.

Residues His105 and His107 each coordinate Zn(2+).

It belongs to the aldolase class II family. MtnB subfamily. Zn(2+) serves as cofactor.

It carries out the reaction 5-(methylsulfanyl)-D-ribulose 1-phosphate = 5-methylsulfanyl-2,3-dioxopentyl phosphate + H2O. It participates in amino-acid biosynthesis; L-methionine biosynthesis via salvage pathway; L-methionine from S-methyl-5-thio-alpha-D-ribose 1-phosphate: step 2/6. Catalyzes the dehydration of methylthioribulose-1-phosphate (MTRu-1-P) into 2,3-diketo-5-methylthiopentyl-1-phosphate (DK-MTP-1-P). This chain is Methylthioribulose-1-phosphate dehydratase, found in Acidiphilium cryptum (strain JF-5).